The sequence spans 675 residues: Cysteine-rich receptor-like protein kinase 25 (675 aa).

A signal peptide spans 1–25 (MSSCFKSSVSLFSVFLFMILKTVTS). Residues 26-281 (DPTYLYHICP…IPSEKGKGKN (256 aa)) are Extracellular-facing. 2 Gnk2-homologous domains span residues 28-134 (TYLY…NQSI) and 140-247 (IRPG…LYPF). Asparagine 36, asparagine 43, asparagine 77, asparagine 106, asparagine 131, asparagine 151, asparagine 161, asparagine 188, asparagine 249, and asparagine 281 each carry an N-linked (GlcNAc...) asparagine glycan. A helical membrane pass occupies residues 282-302 (LTVIVTAIAVPVSVCVLLLGA). Residues 303-675 (MCWLLARRRN…DSSITIVYPR (373 aa)) lie on the Cytoplasmic side of the membrane. In terms of domain architecture, Protein kinase spans 347-622 (FSESNKLGHG…DILVMMNSFT (276 aa)). Residues 353–361 (LGHGGFGEV) and lysine 375 contribute to the ATP site. The residue at position 420 (tyrosine 420) is a Phosphotyrosine. Aspartate 472 serves as the catalytic Proton acceptor. The residue at position 476 (serine 476) is a Phosphoserine. Threonine 512 carries the post-translational modification Phosphothreonine. The residue at position 520 (tyrosine 520) is a Phosphotyrosine. The disordered stretch occupies residues 638 to 661 (MKDSRDPRSGGSASDHSATSKSLP). Residues 648 to 661 (GSASDHSATSKSLP) are compositionally biased toward polar residues.

It belongs to the protein kinase superfamily. Ser/Thr protein kinase family. CRK subfamily.

It localises to the membrane. It carries out the reaction L-seryl-[protein] + ATP = O-phospho-L-seryl-[protein] + ADP + H(+). The enzyme catalyses L-threonyl-[protein] + ATP = O-phospho-L-threonyl-[protein] + ADP + H(+). The chain is Cysteine-rich receptor-like protein kinase 25 (CRK25) from Arabidopsis thaliana (Mouse-ear cress).